A 318-amino-acid polypeptide reads, in one-letter code: MSDIKHAKLLILGSGPAGYTAAIYAARANLKPVLVTGLQQGGQLTTTDEIENWPGDFEMTTGSGLMQRMLQHAEKFETEIVFDHINRVDLSSRPFKLFGDVQNFTCDALIIATGASARYIGLPSEENYKGRGVSACATCDGFFYRNKPVGVIGGGNTAVEEALYLANIASTVHLIHRRDSFRAEKILIDRLYKKVEEGKIVLHTDRTLDEVLGDNMGVTGLRLANTKTGEKEELKLDGLFVAIGHSPNTEIFQGQLELNNGYIVVKSGLDGNATATSVEGVFAAGDVMDHNYRQAITSAGTGCMAALDAERYLDAQEA.

Residue 36 to 43 participates in FAD binding; the sequence is TGLQQGGQ. The cysteines at positions 136 and 139 are disulfide-linked. 286-295 lines the FAD pocket; it reads DVMDHNYRQA.

Belongs to the class-II pyridine nucleotide-disulfide oxidoreductase family. As to quaternary structure, homodimer. Requires FAD as cofactor.

It localises to the cytoplasm. It catalyses the reaction [thioredoxin]-dithiol + NADP(+) = [thioredoxin]-disulfide + NADPH + H(+). This is Thioredoxin reductase (trxB) from Haemophilus influenzae (strain ATCC 51907 / DSM 11121 / KW20 / Rd).